Here is a 156-residue protein sequence, read N- to C-terminus: C-type lectin lectoxin-Phi2 (156 aa).

Residues 1–23 (MGRFIFVSLGLLVLAFSLSGIGA) form the signal peptide. 3 disulfides stabilise this stretch: cysteine 27–cysteine 38, cysteine 55–cysteine 154, and cysteine 129–cysteine 146. Positions 34–155 (HNVSCYKLIN…CNRRHRFLCK (122 aa)) constitute a C-type lectin domain. Residues asparagine 35 and asparagine 109 are each glycosylated (N-linked (GlcNAc...) asparagine). The short motif at 119-121 (EPN) is the Mannose-binding element. Positions 127, 142, and 143 each coordinate Ca(2+).

The protein belongs to the true venom lectin family. In terms of tissue distribution, expressed by the venom gland.

The protein localises to the secreted. Functionally, mannose-binding lectin which recognizes specific carbohydrate structures and agglutinates a variety of animal cells by binding to cell-surface glycoproteins and glycolipids. May be a calcium-dependent lectin. In Philodryas olfersii (Green snake), this protein is C-type lectin lectoxin-Phi2.